The primary structure comprises 476 residues: Probable cytosolic Fe-S cluster assembly factor GJ13047 (476 aa).

[4Fe-4S] cluster is bound by residues cysteine 23, cysteine 68, cysteine 71, cysteine 74, cysteine 187, cysteine 243, cysteine 395, and cysteine 399.

This sequence belongs to the NARF family.

Component of the cytosolic iron-sulfur (Fe/S) protein assembly machinery. Required for maturation of extramitochondrial Fe/S proteins. The sequence is that of Probable cytosolic Fe-S cluster assembly factor GJ13047 from Drosophila virilis (Fruit fly).